A 600-amino-acid chain; its full sequence is LLFLFSSAYSRGVFRRDTHKSEVAHRFKDLGEEHFKGLVLVAFSQYLQQCPFEEHVKLVNEVTEFAKTCVADESAENCDKSLHTLFGDKLCTVATLRETYGEMADCCAKQEPERNECFLQHKDDNPNLPPLVRPEVDVMCTAFHDNEATFLKKYLYEVARRHPYFYAPELLFFAARYKAAFAECCQAADKAACLLPKLDELRDEGKASSAKQRLKCASLQKFGDRAFKAWAVARLSQKFPKAEFAEVSKLVTDLTKVHTECCHGDLLECADDRADLAKYMCENQDSISSKLKECCDKPLLEKSHCLAEVENDEMPADLPSLAADYVESKDVCKNYAEAKDVFLGMFLYEYARRHPDYSVMLLLRLAKAYEATLEKCCAAADPHECYAKVFDEFQPLVEEPQNLVKQNCELFEQLGEYKFQNALLVRYTKKVPQVSTPTLVEVSRNLGKVGAKCCKLPEAKRMPCAEDYLSVVLNRLCVLHEKTPVSEKVTKCCTESLVNRRPCFSALELDEAYVPKAFNAETFTFHADMCTLSEKEKQVKKQTALVELVKHKPKATKEQLKGVMDNFAAFVEKCCKADDKEACFAEEGPKFVAASQAALA.

The signal sequence occupies residues 1–10; sequence LLFLFSSAYS. Residues 11-16 constitute a propeptide that is removed on maturation; sequence RGVFRR. Albumin domains lie at 11 to 202, 203 to 395, and 396 to 593; these read RGVF…DELR, DEGK…EFQP, and LVEE…KFVA. Residue His19 participates in Cu cation binding. Ser21 carries the phosphoserine modification. Residues Glu22 and Asp29 each coordinate Ca(2+). Cys69 and Cys78 are disulfide-bonded. Phosphoserine occurs at positions 74 and 81. His83 is a binding site for Zn(2+). 6 disulfide bridges follow: Cys91–Cys107, Cys106–Cys117, Cys140–Cys185, Cys184–Cys193, Cys216–Cys262, and Cys261–Cys269. Thr99 is modified (phosphothreonine). Lys221 is subject to N6-succinyllysine. Lys256 contributes to the (4Z,15Z)-bilirubin IXalpha binding site. Residue Glu260 coordinates Ca(2+). Zn(2+) is bound by residues His263 and Asp265. The Ca(2+) site is built by Asp265, Glu268, Asp271, and Asp275. 8 cysteine pairs are disulfide-bonded: Cys281-Cys295, Cys294-Cys305, Cys332-Cys377, Cys376-Cys385, Cys408-Cys454, Cys453-Cys464, Cys477-Cys493, and Cys492-Cys503. Ser289 is modified (phosphoserine). Ser435 is subject to Phosphoserine. Phosphothreonine is present on residues Thr436 and Thr438. At Lys452 the chain carries N6-succinyllysine. At Ser505 the chain carries Phosphoserine. 2 cysteine pairs are disulfide-bonded: Cys530/Cys575 and Cys574/Cys583. Position 535 is an N6-succinyllysine (Lys535). N6-methyllysine is present on Lys550. Lys580 is modified (N6-succinyllysine).

It belongs to the ALB/AFP/VDB family. Interacts with FCGRT; this interaction regulates ALB homeostasis. Interacts with TASOR. In plasma, occurs in a covalently-linked complex with chromophore-bound alpha-1-microglobulin; this interaction does not prevent fatty acid binding to ALB. Post-translationally, phosphorylated by FAM20C in the extracellular medium. As to expression, plasma.

Its subcellular location is the secreted. Functionally, binds water, Ca(2+), Na(+), K(+), fatty acids, hormones, bilirubin and drugs. Its main function is the regulation of the colloidal osmotic pressure of blood. Major zinc transporter in plasma, typically binds about 80% of all plasma zinc. Major calcium and magnesium transporter in plasma, binds approximately 45% of circulating calcium and magnesium in plasma. Potentially has more than two calcium-binding sites and might additionally bind calcium in a non-specific manner. The shared binding site between zinc and calcium at residue Asp-265 suggests a crosstalk between zinc and calcium transport in the blood. The rank order of affinity is zinc &gt; calcium &gt; magnesium. Binds to the bacterial siderophore enterobactin and inhibits enterobactin-mediated iron uptake of E.coli from ferric transferrin, and may thereby limit the utilization of iron and growth of enteric bacteria such as E.coli. Does not prevent iron uptake by the bacterial siderophore aerobactin. The sequence is that of Albumin (ALB) from Macaca mulatta (Rhesus macaque).